Consider the following 486-residue polypeptide: Cysteine--tRNA ligase (486 aa).

Residue C29 participates in Zn(2+) binding. Residues 31–41 carry the 'HIGH' region motif; that stretch reads VTVYDYCHLGH. Residues C214, H239, and E243 each coordinate Zn(2+). Residues 271-275 carry the 'KMSKS' region motif; the sequence is KMSKS. K274 is an ATP binding site.

It belongs to the class-I aminoacyl-tRNA synthetase family. In terms of assembly, monomer. Requires Zn(2+) as cofactor.

Its subcellular location is the cytoplasm. It carries out the reaction tRNA(Cys) + L-cysteine + ATP = L-cysteinyl-tRNA(Cys) + AMP + diphosphate. The sequence is that of Cysteine--tRNA ligase from Nostoc sp. (strain PCC 7120 / SAG 25.82 / UTEX 2576).